The chain runs to 285 residues: Cytochrome P450 monooxygenase eupD (285 aa).

The N-terminal stretch at 1–19 (MSIAGLVTTLPWLMNMLRA) is a signal peptide. Residue Cys-229 participates in heme binding.

It belongs to the cytochrome P450 family. Heme is required as a cofactor.

It functions in the pathway secondary metabolite biosynthesis; terpenoid biosynthesis. Cytochrome P450 monooxygenase; part of the gene cluster that mediates the biosynthesis of eupenifeldin, a bistropolone meroterpenoid that acts as an antitumor agent. The first step of eupenifeldin biosynthesis is the biosynthesis of 3-methylorcinaldehyde performed by the non-reducing polyketide synthase eupA. Oxidative dearomatization of 3-methylorcinaldehyde likely catalyzed by the FAD-dependent monooxygenase eupB is followed by oxidative ring expansion by the 2-oxoglutarate-dependent dioxygenase eupC to provide the first tropolone metabolite, tropolone stipitaldehyde. In parallel, generation of sesquiterpene alpha-humulene from farnesylpyrophosphate (FPP) is catalyzed by the terpene cyclase eupE. The cytochrome P450 monooxygenase eupD then hydroxylates humulene to humulenol. The putative Diels-Alderase eupF probably catalyzes the formation of the tropolone-humulene skeleton by linking humulenol and the polyketide moiety. The short-chain dehydrogenase/reductase eupG and the flavin-dependent monooxygenase eupH are also essential for eupenifeldin biosynthesis and are likely the additional decorating enzymes of the tropolone-humulene skeleton to produce final eupenifeldin or derivatives. This chain is Cytochrome P450 monooxygenase eupD, found in Phoma sp.